Consider the following 37-residue polypeptide: Large ribosomal subunit protein bL36A (37 aa).

Belongs to the bacterial ribosomal protein bL36 family.

This chain is Large ribosomal subunit protein bL36A, found in Methylobacillus flagellatus (strain ATCC 51484 / DSM 6875 / VKM B-1610 / KT).